The following is a 200-amino-acid chain: Vacuolar iron transporter homolog 1 (200 aa).

Residues 1-34 (MESHNVSNSLNLDMEMDQEKAFDYSKRAQWLRAA) are Cytoplasmic-facing. Residues 35–55 (VLGANDGLVSTASLMMGVGAV) traverse the membrane as a helical segment. At 56–62 (KQDVKVM) the chain is on the vacuolar side. A helical membrane pass occupies residues 63 to 83 (ILSGFAGLVAGACSMAIGEFV). Topologically, residues 84–116 (SVYSQYDIEVAQMKRENGGQVEKEKLPSPMQAA) are cytoplasmic. A helical transmembrane segment spans residues 117-137 (AASALAFSLGAIVPLMAAAFV). Over 138-143 (KDYHVR) the chain is Vacuolar. A helical transmembrane segment spans residues 144-164 (IGAIVAAVTLALVMFGWLGAV). Residues 165–176 (LGKAPVFKSSAR) are Cytoplasmic-facing. The chain crosses the membrane as a helical span at residues 177–197 (VLIGGWLAMAVTFGLTKLIGT). The Vacuolar portion of the chain corresponds to 198 to 200 (HSL).

This sequence belongs to the CCC1 family. Expressed in the vascular bundles of the shoot and the stele of the root. Expressed in inflorescences and at lower levels in leaves.

Its subcellular location is the vacuole membrane. It catalyses the reaction Fe(2+)(in) = Fe(2+)(out). Vacuolar iron transporter involved in the transfer of iron ions from the cytosol to the vacuole for intracellular iron storage. Involved in regulation of cellular iron homeostasis. Vacuolar iron storage is required for seed embryo and seedling development. This is Vacuolar iron transporter homolog 1 from Arabidopsis thaliana (Mouse-ear cress).